Here is a 314-residue protein sequence, read N- to C-terminus: Lysophospholipase D GDPD1 (314 aa).

The Extracellular portion of the chain corresponds to 1-3 (MSS). A helical transmembrane segment spans residues 4–24 (TAAFCLLSTLGGYLVTSFLLL). Residues 25-195 (KYPALLHQRK…VDKCYKENSD (171 aa)) lie on the Cytoplasmic side of the membrane. Residues 40–309 (SRHISHRGGA…DYPTKLKDFL (270 aa)) form the GP-PDE domain. A divalent metal cation is bound by residues E72, D74, and H87. A helical membrane pass occupies residues 196-216 (IPILFSLQRVLLILGLFFTGL). Over 217–314 (LPFVPIREQF…LKDFLNNFSA (98 aa)) the chain is Extracellular.

The protein belongs to the glycerophosphoryl diester phosphodiesterase family. In terms of tissue distribution, widely expressed.

It is found in the cytoplasm. Its subcellular location is the membrane. It localises to the perinuclear region. The protein resides in the endoplasmic reticulum. It catalyses the reaction 1-hexadecanoyl-sn-glycero-3-phosphocholine + H2O = 1-hexadecanoyl-sn-glycero-3-phosphate + choline + H(+). The enzyme catalyses 1-hexadecanoyl-sn-glycero-3-phosphoethanolamine + H2O = 1-hexadecanoyl-sn-glycero-3-phosphate + ethanolamine + H(+). The catalysed reaction is N-hexadecanoyl-sn-glycero-3-phosphoethanolamine + H2O = N-hexadecanoylethanolamine + sn-glycerol 3-phosphate + H(+). It carries out the reaction N-(5Z,8Z,11Z,14Z-eicosatetraenoyl)-1-(9Z-octadecenoyl)-sn-glycero-3-phosphoethanolamine + H2O = N-(5Z,8Z,11Z,14Z-eicosatetraenoyl)-ethanolamine + 1-(9Z-octadecenoyl)-sn-glycero-3-phosphate + H(+). It catalyses the reaction N,1-di-(9Z-octadecenoyl)-sn-glycero-3-phosphoethanolamine + H2O = N-(9Z-octadecenoyl) ethanolamine + 1-(9Z-octadecenoyl)-sn-glycero-3-phosphate + H(+). The enzyme catalyses N-hexadecanoyl-1-(9Z-octadecenoyl)-sn-glycero-3-phosphoethanolamine + H2O = N-hexadecanoylethanolamine + 1-(9Z-octadecenoyl)-sn-glycero-3-phosphate + H(+). The catalysed reaction is a 1-O-alkyl-sn-glycero-3-phosphocholine + H2O = a 1-O-alkyl-sn-glycero-3-phosphate + choline + H(+). It carries out the reaction 1-O-hexadecyl-sn-glycero-3-phosphocholine + H2O = 1-O-hexadecyl-sn-glycero-3-phosphate + choline + H(+). It catalyses the reaction 1-(9Z-octadecenoyl)-sn-glycero-3-phosphocholine + H2O = 1-(9Z-octadecenoyl)-sn-glycero-3-phosphate + choline + H(+). The enzyme catalyses N,1-dihexadecanoyl-sn-glycero-3-phosphoethanolamine + H2O = N-hexadecanoylethanolamine + 1-hexadecanoyl-sn-glycero-3-phosphate + H(+). The catalysed reaction is 1-O-(1Z-octadecenyl)-sn-glycero-3-phospho-(N-5Z,8Z,11Z,14Z-eicosatetraenoyl)-ethanolamine + H2O = 1-O-(1Z-octadecenyl)-sn-glycero-3-phosphate + N-(5Z,8Z,11Z,14Z-eicosatetraenoyl)-ethanolamine + H(+). It carries out the reaction 1-O-(1Z-octadecenyl)-sn-glycero-3-phospho-(N-9Z-octadecenoyl)-ethanolamine + H2O = 1-O-(1Z-octadecenyl)-sn-glycero-3-phosphate + N-(9Z-octadecenoyl) ethanolamine + H(+). It catalyses the reaction 1-O-(1Z-octadecenyl)-sn-glycero-3-phospho-N-hexadecanoyl-ethanolamine + H2O = 1-O-(1Z-octadecenyl)-sn-glycero-3-phosphate + N-hexadecanoylethanolamine + H(+). With respect to regulation, lysophospholipase D activity is increased by magnesium and manganese and inhibited by calcium in a concentration dependent manner. Loss of lysophospholipase D activity by addition of EDTA. Hydrolyzes lysoglycerophospholipids to produce lysophosphatidic acid (LPA) and the corresponding amines. Shows a preference for 1-O-alkyl-sn-glycero-3-phosphocholine (lyso-PAF), lysophosphatidylethanolamine (lyso-PE) and lysophosphatidylcholine (lyso-PC). May be involved in bioactive N-acylethanolamine biosynthesis from both N-acyl-lysoplasmenylethanolamin (N-acyl-lysoPlsEt) and N-acyl-lysophosphatidylethanolamin (N-acyl-lysoPE). In addition, hydrolyzes glycerophospho-N-acylethanolamine to N-acylethanolamine. Does not display glycerophosphodiester phosphodiesterase activity, since it cannot hydrolyze either glycerophosphoinositol or glycerophosphocholine. The chain is Lysophospholipase D GDPD1 from Mus musculus (Mouse).